We begin with the raw amino-acid sequence, 195 residues long: Probable GTP-binding protein EngB (195 aa).

The EngB-type G domain maps to 22–195 (GLPEIALAGR…WGAIKKMINR (174 aa)). Residues 30 to 37 (GRSNVGKS), 57 to 61 (GKTQT), 75 to 78 (DVPG), 142 to 145 (TKAD), and 174 to 176 (FSS) each bind GTP. Mg(2+)-binding residues include S37 and T59.

The protein belongs to the TRAFAC class TrmE-Era-EngA-EngB-Septin-like GTPase superfamily. EngB GTPase family. Mg(2+) is required as a cofactor.

In terms of biological role, necessary for normal cell division and for the maintenance of normal septation. Binds GTP and GDP. This Bacillus subtilis (strain 168) protein is Probable GTP-binding protein EngB.